The following is a 149-amino-acid chain: UPF0179 protein MA_3685 (149 aa).

It belongs to the UPF0179 family.

This Methanosarcina acetivorans (strain ATCC 35395 / DSM 2834 / JCM 12185 / C2A) protein is UPF0179 protein MA_3685.